The sequence spans 369 residues: Protein RecA (369 aa).

Positions 1 to 10 (MARTTDDSKK) are enriched in basic and acidic residues. The interval 1–20 (MARTTDDSKKAAPAAGTADE) is disordered. 82–89 (GPESSGKT) contributes to the ATP binding site. The disordered stretch occupies residues 350 to 369 (PAAAVAAPDEGDDDLGDEEV). A compositionally biased stretch (acidic residues) spans 358–369 (DEGDDDLGDEEV).

It belongs to the RecA family.

It is found in the cytoplasm. Can catalyze the hydrolysis of ATP in the presence of single-stranded DNA, the ATP-dependent uptake of single-stranded DNA by duplex DNA, and the ATP-dependent hybridization of homologous single-stranded DNAs. It interacts with LexA causing its activation and leading to its autocatalytic cleavage. In Gloeobacter violaceus (strain ATCC 29082 / PCC 7421), this protein is Protein RecA.